The chain runs to 229 residues: Potassium/proton antiporter CemA (229 aa).

3 helical membrane-spanning segments follow: residues 7–27 (FTPL…SLLF), 107–127 (ILHF…SILG), and 189–209 (IISG…KYWI).

This sequence belongs to the CemA family.

It is found in the plastid. Its subcellular location is the chloroplast inner membrane. The enzyme catalyses K(+)(in) + H(+)(out) = K(+)(out) + H(+)(in). Contributes to K(+)/H(+) antiport activity by supporting proton efflux to control proton extrusion and homeostasis in chloroplasts in a light-dependent manner to modulate photosynthesis. Prevents excessive induction of non-photochemical quenching (NPQ) under continuous-light conditions. Indirectly promotes efficient inorganic carbon uptake into chloroplasts. The protein is Potassium/proton antiporter CemA of Helianthus annuus (Common sunflower).